The following is a 227-amino-acid chain: Cytochrome c oxidase subunit 2 (227 aa).

The Mitochondrial intermembrane portion of the chain corresponds to 1-14 (MAHPVQLGLQDATS). Residues 15 to 45 (PVMEELVTFHDHALMAMFLISFLILYALSAT) traverse the membrane as a helical segment. The Mitochondrial matrix segment spans residues 46 to 59 (LTTKLTNTNITDAQ). A helical membrane pass occupies residues 60–87 (EMETIWTILPAVILVLIALPSLRILYMT). The Mitochondrial intermembrane portion of the chain corresponds to 88–227 (DEINNPSFTI…IFEMGPVFTL (140 aa)). 6 residues coordinate Cu cation: histidine 161, cysteine 196, glutamate 198, cysteine 200, histidine 204, and methionine 207. Glutamate 198 serves as a coordination point for Mg(2+).

The protein belongs to the cytochrome c oxidase subunit 2 family. Component of the cytochrome c oxidase (complex IV, CIV), a multisubunit enzyme composed of 14 subunits. The complex is composed of a catalytic core of 3 subunits MT-CO1, MT-CO2 and MT-CO3, encoded in the mitochondrial DNA, and 11 supernumerary subunits COX4I, COX5A, COX5B, COX6A, COX6B, COX6C, COX7A, COX7B, COX7C, COX8 and NDUFA4, which are encoded in the nuclear genome. The complex exists as a monomer or a dimer and forms supercomplexes (SCs) in the inner mitochondrial membrane with NADH-ubiquinone oxidoreductase (complex I, CI) and ubiquinol-cytochrome c oxidoreductase (cytochrome b-c1 complex, complex III, CIII), resulting in different assemblies (supercomplex SCI(1)III(2)IV(1) and megacomplex MCI(2)III(2)IV(2)). Found in a complex with TMEM177, COA6, COX18, COX20, SCO1 and SCO2. Interacts with TMEM177 in a COX20-dependent manner. Interacts with COX20. Interacts with COX16. Cu cation is required as a cofactor.

The protein localises to the mitochondrion inner membrane. It catalyses the reaction 4 Fe(II)-[cytochrome c] + O2 + 8 H(+)(in) = 4 Fe(III)-[cytochrome c] + 2 H2O + 4 H(+)(out). In terms of biological role, component of the cytochrome c oxidase, the last enzyme in the mitochondrial electron transport chain which drives oxidative phosphorylation. The respiratory chain contains 3 multisubunit complexes succinate dehydrogenase (complex II, CII), ubiquinol-cytochrome c oxidoreductase (cytochrome b-c1 complex, complex III, CIII) and cytochrome c oxidase (complex IV, CIV), that cooperate to transfer electrons derived from NADH and succinate to molecular oxygen, creating an electrochemical gradient over the inner membrane that drives transmembrane transport and the ATP synthase. Cytochrome c oxidase is the component of the respiratory chain that catalyzes the reduction of oxygen to water. Electrons originating from reduced cytochrome c in the intermembrane space (IMS) are transferred via the dinuclear copper A center (CU(A)) of subunit 2 and heme A of subunit 1 to the active site in subunit 1, a binuclear center (BNC) formed by heme A3 and copper B (CU(B)). The BNC reduces molecular oxygen to 2 water molecules using 4 electrons from cytochrome c in the IMS and 4 protons from the mitochondrial matrix. The chain is Cytochrome c oxidase subunit 2 (MT-CO2) from Theropithecus gelada (Gelada baboon).